Consider the following 584-residue polypeptide: J protein JJJ2 (584 aa).

A J domain is found at 13–77; sequence TYYSILGLTS…DQKLRYDRDL (65 aa). The interval 216 to 312 is disordered; that stretch reads YSEDPNSCLG…FSSGSHDSNL (97 aa). S229 bears the Phosphoserine mark. Low complexity predominate over residues 241–253; that stretch reads QQQQQQQQQQQQQ. Over residues 269-282 the composition is skewed to basic and acidic residues; sequence KDNKESKRESRVSP. Polar residues predominate over residues 299–312; sequence KTSTFSSGSHDSNL.

It localises to the cytoplasm. The protein resides in the nucleus. The chain is J protein JJJ2 (JJJ2) from Saccharomyces cerevisiae (strain YJM789) (Baker's yeast).